The chain runs to 446 residues: Exodeoxyribonuclease 7 large subunit (446 aa).

It belongs to the XseA family. As to quaternary structure, heterooligomer composed of large and small subunits.

The protein resides in the cytoplasm. It carries out the reaction Exonucleolytic cleavage in either 5'- to 3'- or 3'- to 5'-direction to yield nucleoside 5'-phosphates.. Its function is as follows. Bidirectionally degrades single-stranded DNA into large acid-insoluble oligonucleotides, which are then degraded further into small acid-soluble oligonucleotides. This is Exodeoxyribonuclease 7 large subunit from Streptococcus pneumoniae (strain Taiwan19F-14).